The following is a 165-amino-acid chain: Myosin regulatory light chain 2B, cardiac muscle isoform (165 aa).

A2 is subject to N,N,N-trimethylalanine. EF-hand domains lie at T23–L58, D93–R128, and F129–K164. Ca(2+)-binding residues include D36, N38, D40, and D47.

As to quaternary structure, myosin is a hexamer of 2 heavy chains and 4 light chains. The N-terminus is blocked. N,N,N-trimethylalanine, found in other myosin light chains would not have been detected in the N-terminal tryptic peptide in PubMed:7319048 because it would remain trimethylated and ninhydrin negative after hydrolysis.

This is Myosin regulatory light chain 2B, cardiac muscle isoform from Gallus gallus (Chicken).